The primary structure comprises 186 residues: Trafficking protein particle complex subunit 5 (186 aa).

It belongs to the TRAPP small subunits family. BET3 subfamily. In terms of assembly, part of the multisubunit TRAPP (transport protein particle) complex.

The protein localises to the golgi apparatus. It localises to the cis-Golgi network. Its subcellular location is the endoplasmic reticulum. Functionally, may play a role in vesicular transport from endoplasmic reticulum to Golgi. The sequence is that of Trafficking protein particle complex subunit 5 (trappc5) from Dictyostelium discoideum (Social amoeba).